The sequence spans 235 residues: Protein Thf1 (235 aa).

Residues 179-228 (LNLSSDKLQKDLDLYRSNVDKMGQLLAVIEDALEAERKKREKAKQEVATT) adopt a coiled-coil conformation.

The protein belongs to the THF1 family.

Functionally, may be involved in photosynthetic membrane biogenesis. This Rippkaea orientalis (strain PCC 8801 / RF-1) (Cyanothece sp. (strain PCC 8801)) protein is Protein Thf1.